A 671-amino-acid polypeptide reads, in one-letter code: DNA ligase (671 aa).

NAD(+) is bound by residues 32–36 (DAEYD), 81–82 (SL), and E113. The N6-AMP-lysine intermediate role is filled by K115. R136, E173, K290, and K314 together coordinate NAD(+). Zn(2+) contacts are provided by C408, C411, C426, and C432. The 79-residue stretch at 593–671 (EIDSPFAGKT…EAEMIRLLGA (79 aa)) folds into the BRCT domain.

Belongs to the NAD-dependent DNA ligase family. LigA subfamily. Mg(2+) serves as cofactor. The cofactor is Mn(2+).

The catalysed reaction is NAD(+) + (deoxyribonucleotide)n-3'-hydroxyl + 5'-phospho-(deoxyribonucleotide)m = (deoxyribonucleotide)n+m + AMP + beta-nicotinamide D-nucleotide.. Its function is as follows. DNA ligase that catalyzes the formation of phosphodiester linkages between 5'-phosphoryl and 3'-hydroxyl groups in double-stranded DNA using NAD as a coenzyme and as the energy source for the reaction. It is essential for DNA replication and repair of damaged DNA. This chain is DNA ligase, found in Salmonella gallinarum (strain 287/91 / NCTC 13346).